Here is a 105-residue protein sequence, read N- to C-terminus: Large ribosomal subunit protein uL24 (105 aa).

It belongs to the universal ribosomal protein uL24 family. In terms of assembly, part of the 50S ribosomal subunit.

One of two assembly initiator proteins, it binds directly to the 5'-end of the 23S rRNA, where it nucleates assembly of the 50S subunit. Its function is as follows. One of the proteins that surrounds the polypeptide exit tunnel on the outside of the subunit. The chain is Large ribosomal subunit protein uL24 from Buchnera aphidicola subsp. Cinara cedri (strain Cc).